The primary structure comprises 1184 residues: DNA-directed RNA polymerase subunit beta' (1184 aa).

Residues cysteine 60, cysteine 62, cysteine 75, and cysteine 78 each coordinate Zn(2+). Mg(2+) is bound by residues aspartate 449, aspartate 451, and aspartate 453. Zn(2+)-binding residues include cysteine 794, cysteine 867, cysteine 874, and cysteine 877.

Belongs to the RNA polymerase beta' chain family. As to quaternary structure, the RNAP catalytic core consists of 2 alpha, 1 beta, 1 beta' and 1 omega subunit. When a sigma factor is associated with the core the holoenzyme is formed, which can initiate transcription. The cofactor is Mg(2+). Zn(2+) serves as cofactor.

The catalysed reaction is RNA(n) + a ribonucleoside 5'-triphosphate = RNA(n+1) + diphosphate. Functionally, DNA-dependent RNA polymerase catalyzes the transcription of DNA into RNA using the four ribonucleoside triphosphates as substrates. In Thermoanaerobacter sp. (strain X514), this protein is DNA-directed RNA polymerase subunit beta'.